Here is a 329-residue protein sequence, read N- to C-terminus: Eukaryotic translation initiation factor 3 subunit I (329 aa).

5 WD repeats span residues 8–47, 50–89, 145–184, 187–226, and 284–323; these read GHQRAITQIKYNREGDLLFSAAKDSKPNVWWSLNGERLGT, GHGGVIWCLDVDWQSINLITGGGDSSCRLWDLETGKNIAT, ITDSKVTSMIWGSLDETIITGHEAGDLIQWDLRTGKKIHS, EHTHQITDMQLSRDGTMFVTASKDHTAKLFDTNSLELLKE, and GHFGPINSLAFHPDGKSYASGGEDGYVRVHNFDQSYFDYT.

This sequence belongs to the eIF-3 subunit I family. In terms of assembly, component of the eukaryotic translation initiation factor 3 (eIF-3) complex.

Its subcellular location is the cytoplasm. Component of the eukaryotic translation initiation factor 3 (eIF-3) complex, which is involved in protein synthesis of a specialized repertoire of mRNAs and, together with other initiation factors, stimulates binding of mRNA and methionyl-tRNAi to the 40S ribosome. The eIF-3 complex specifically targets and initiates translation of a subset of mRNAs involved in cell proliferation. The sequence is that of Eukaryotic translation initiation factor 3 subunit I from Bombyx mori (Silk moth).